A 601-amino-acid chain; its full sequence is Glutamine--tRNA ligase (601 aa).

A 'HIGH' region motif is present at residues 76-86 (PEPNGYLHIGH). ATP is bound by residues 77–79 (EPN) and 83–89 (HIGHAKS). Positions 109 and 253 each coordinate L-glutamine. Residues Thr-272, 301–302 (RL), and 309–311 (MSK) contribute to the ATP site. Residues 308-312 (VMSKR) carry the 'KMSKS' region motif.

This sequence belongs to the class-I aminoacyl-tRNA synthetase family. Monomer.

Its subcellular location is the cytoplasm. It catalyses the reaction tRNA(Gln) + L-glutamine + ATP = L-glutaminyl-tRNA(Gln) + AMP + diphosphate. This is Glutamine--tRNA ligase from Rhodopirellula baltica (strain DSM 10527 / NCIMB 13988 / SH1).